The chain runs to 130 residues: Small ribosomal subunit protein uS9 (130 aa).

It belongs to the universal ribosomal protein uS9 family.

This chain is Small ribosomal subunit protein uS9, found in Cupriavidus pinatubonensis (strain JMP 134 / LMG 1197) (Cupriavidus necator (strain JMP 134)).